The chain runs to 225 residues: 2-C-methyl-D-erythritol 4-phosphate cytidylyltransferase (225 aa).

It belongs to the IspD/TarI cytidylyltransferase family. IspD subfamily.

The catalysed reaction is 2-C-methyl-D-erythritol 4-phosphate + CTP + H(+) = 4-CDP-2-C-methyl-D-erythritol + diphosphate. Its pathway is isoprenoid biosynthesis; isopentenyl diphosphate biosynthesis via DXP pathway; isopentenyl diphosphate from 1-deoxy-D-xylulose 5-phosphate: step 2/6. In terms of biological role, catalyzes the formation of 4-diphosphocytidyl-2-C-methyl-D-erythritol from CTP and 2-C-methyl-D-erythritol 4-phosphate (MEP). The polypeptide is 2-C-methyl-D-erythritol 4-phosphate cytidylyltransferase (Haemophilus influenzae (strain PittGG)).